We begin with the raw amino-acid sequence, 488 residues long: Multidrug resistance outer membrane protein MdtP (488 aa).

Positions 1–23 (MINRQLSRLLLCSILGSTTLISG) are cleaved as a signal peptide. The N-palmitoyl cysteine moiety is linked to residue Cys-24. The S-diacylglycerol cysteine moiety is linked to residue Cys-24.

It belongs to the outer membrane factor (OMF) (TC 1.B.17) family. Could be part of a tripartite efflux system composed of MdtN, MdtO and MdtP.

The protein resides in the cell outer membrane. Its function is as follows. Could be involved in resistance to puromycin, acriflavine and tetraphenylarsonium chloride. The protein is Multidrug resistance outer membrane protein MdtP (mdtP) of Escherichia coli (strain K12).